A 313-amino-acid polypeptide reads, in one-letter code: Probable lysophospholipase L2 (313 aa).

The protein localises to the cell inner membrane. It carries out the reaction a 1-acyl-sn-glycero-3-phosphocholine + H2O = sn-glycerol 3-phosphocholine + a fatty acid + H(+). This Haemophilus influenzae (strain ATCC 51907 / DSM 11121 / KW20 / Rd) protein is Probable lysophospholipase L2 (pldB).